The primary structure comprises 485 residues: Zinc finger protein 639 (485 aa).

Positions Met-1–His-14 are enriched in basic residues. The interval Met-1–Asp-20 is disordered. Ser-60 bears the Phosphoserine mark. Residue Lys-76 forms a Glycyl lysine isopeptide (Lys-Gly) (interchain with G-Cter in SUMO2) linkage. A Phosphoserine modification is found at Ser-88. Glycyl lysine isopeptide (Lys-Gly) (interchain with G-Cter in SUMO2) cross-links involve residues Lys-177, Lys-181, and Lys-226. 8 consecutive C2H2-type zinc fingers follow at residues Tyr-204 to His-227, Asn-233 to His-255, Tyr-260 to His-283, Tyr-289 to His-311, Phe-374 to His-397, His-403 to His-425, Tyr-431 to His-454, and His-460 to His-482. An interaction with CTNNA2 region spans residues Lys-371–Ser-455.

It belongs to the krueppel C2H2-type zinc-finger protein family. As to quaternary structure, interacts with CTNNA2.

It is found in the nucleus. In terms of biological role, binds DNA and may function as a transcriptional repressor. The chain is Zinc finger protein 639 (ZNF639) from Bos taurus (Bovine).